We begin with the raw amino-acid sequence, 187 residues long: Large ribosomal subunit protein uL6 (187 aa).

It belongs to the universal ribosomal protein uL6 family. Part of the 50S ribosomal subunit.

This protein binds to the 23S rRNA, and is important in its secondary structure. It is located near the subunit interface in the base of the L7/L12 stalk, and near the tRNA binding site of the peptidyltransferase center. The polypeptide is Large ribosomal subunit protein uL6 (Roseiflexus sp. (strain RS-1)).